The primary structure comprises 386 residues: EARP and GARP complex-interacting protein 1 (386 aa).

An N-acetylmethionine modification is found at Met1. WD repeat units follow at residues 132-172 (GAQG…SQAV), 182-222 (RGQL…QIYC), 226-266 (AHGQ…EPVK), and 270-310 (EHSH…SEPF). Residues 312 to 332 (HLVDDDDVSDPEEHHTEKSKE) are disordered. Ser320 is modified (phosphoserine). Residues 322–332 (PEEHHTEKSKE) are compositionally biased toward basic and acidic residues. A WD 5 repeat occupies 344–384 (EHEDSVYAVDWASADPWLFASLSYDGRLVINRVPRALKYHI).

It belongs to the WD repeat EIPR1 family. In terms of assembly, interacts with two multisubunit tethering complexes: EARP composed of VPS50, VPS51, VPS52 and VPS53 subunits and GARP complex composed of VPS51, VPS52, VPS53 and VPS54 subunits. Interacts with SNAP29. In terms of tissue distribution, ubiquitous. Highly expressed in brain, adipose tissue, spleen and kidney (at protein level).

Its subcellular location is the golgi apparatus. It is found in the trans-Golgi network. Acts as a component of endosomal retrieval machinery that is involved in protein transport from early endosomes to either recycling endosomes or the trans-Golgi network. Mediates the recruitment of Golgi-associated retrograde protein (GARP) complex to the trans-Golgi network and controls early endosome-to-Golgi transport of internalized protein. Promotes the recycling of internalized transferrin receptor (TFRC) to the plasma membrane through interaction with endosome-associated recycling protein (EARP) complex. Controls proper insulin distribution and secretion, and retention of cargo in mature dense core vesicles. Required for the stability of the endosome-associated retrograde protein (EARP) complex subunits and for proper localization and association of EARP with membranes. This is EARP and GARP complex-interacting protein 1 from Rattus norvegicus (Rat).